The chain runs to 553 residues: Cytochrome P450 monooxygenase alnD (553 aa).

Residues 351–371 (LVGAGFVTSSAFLSWLIYSLV) form a helical membrane-spanning segment. C493 serves as a coordination point for heme. N518 is a glycosylation site (N-linked (GlcNAc...) asparagine).

It belongs to the cytochrome P450 family. Heme is required as a cofactor.

It is found in the membrane. It functions in the pathway polyketide biosynthesis. In terms of biological role, cytochrome P450 monooxygenase; part of the gene cluster that mediates the biosynthesis of asperlin, a polyketide showing anti-inflammatory, antitumor and antibiotic activities. The first step of the asperlin biosynthesis is the production of the intermediate 2,4,6-octatrienoic acid by the highly redusing polyketide synthase alnA with cleavage of the PKS product by the esterase alnB. 2,4,6-octatrienoic acid is further converted to asperlin via several steps involving the remaining enzymes from the cluster. The sequence is that of Cytochrome P450 monooxygenase alnD from Emericella nidulans (strain FGSC A4 / ATCC 38163 / CBS 112.46 / NRRL 194 / M139) (Aspergillus nidulans).